We begin with the raw amino-acid sequence, 325 residues long: Olfactory receptor 5H6 (325 aa).

At 1 to 41 the chain is on the extracellular side; the sequence is MFLYLCFIFQRTCSEEMEEENATLLTEFVLTGFLHQPDCKI. N-linked (GlcNAc...) asparagine glycosylation occurs at asparagine 21. Residues 42-62 form a helical membrane-spanning segment; the sequence is PLFLAFLVIYLITIMGNLGLI. Topologically, residues 63-70 are cytoplasmic; the sequence is VLIWKDPH. The helical transmembrane segment at 71–91 threads the bilayer; it reads LHIPMYLFLGSLAFVDASLSS. Over 92–115 the chain is Extracellular; it reads TVTPKMLINFLAKSKMISLSECMV. Cysteine 113 and cysteine 205 are joined by a disulfide. The chain crosses the membrane as a helical span at residues 116–136; sequence QFFSLVTTVTTECFLLATMAY. At 137-155 the chain is on the cytoplasmic side; the sequence is DRYVAICKALLYPVIMTNE. Residues 156-176 traverse the membrane as a helical segment; the sequence is LCIQLLVLSFIGGLLHALIHE. Residues 177–212 lie on the Extracellular side of the membrane; it reads AFSFRLTFCNSNIIQHFYCDIIPLLKISCTDSSINF. The helical transmembrane segment at 213-233 threads the bilayer; the sequence is LMVFIFAGSVQVFTIGTILIS. Over 234-253 the chain is Cytoplasmic; it reads YTIILFTILEKKSIKGIRKA. A helical transmembrane segment spans residues 254–274; it reads VSTCGAHLLSVSLYYGPLTFK. At 275 to 287 the chain is on the extracellular side; the sequence is YLGSASPQADDQD. Residues 288–308 traverse the membrane as a helical segment; sequence MMESLFYTVIVPLLNPMIYSL. The Cytoplasmic portion of the chain corresponds to 309 to 325; the sequence is RNKQVIASFTKMFKSNV.

This sequence belongs to the G-protein coupled receptor 1 family.

The protein localises to the cell membrane. Its function is as follows. Odorant receptor. This is Olfactory receptor 5H6 (OR5H6) from Homo sapiens (Human).